The chain runs to 407 residues: Putative metabolite transport protein HI_1104 (407 aa).

The Cytoplasmic portion of the chain corresponds to 1–16 (MTNKVNSYGWKALIGS). Residues 17–37 (AVGYGMDGFDLLILGFMLSAI) form a helical membrane-spanning segment. At 38-48 (SADLNLTPAQG) the chain is on the periplasmic side. Residues 49–69 (GSLVTWTLIGAVFGGILFGAL) form a helical membrane-spanning segment. Residues 70–77 (SDKYGRVR) are Cytoplasmic-facing. A helical membrane pass occupies residues 78 to 98 (VLTWTILLFAVFTGLCAIAQG). The Periplasmic portion of the chain corresponds to 99 to 107 (YWDLLIYRT). The helical transmembrane segment at 108 to 128 (IAGIGLGGEFGIGMALAAEAW) threads the bilayer. At 129-138 (PARHRAKAAS) the chain is on the cytoplasmic side. Residues 139–159 (YVALGWQVGVLGAALLTPLLL) traverse the membrane as a helical segment. Residue P160 is a topological domain, periplasmic. The helical transmembrane segment at 161 to 181 (HIGWRGMFLVGIFPAFVAWFL) threads the bilayer. The Cytoplasmic segment spans residues 182 to 224 (RSHLHEPEIFTQKQTALSTQSSFTDKLRSFQLLIKDKATSKIS). Residues 225–245 (LGIVVLTSVQNFGYYGIMIWL) form a helical membrane-spanning segment. Residues 246-261 (PNFLSKQLGFSLTKSG) are Periplasmic-facing. The chain crosses the membrane as a helical span at residues 262-282 (LWTAVTVCGMMAGIWIFGQLA). The Cytoplasmic portion of the chain corresponds to 283–288 (DRIGRK). The chain crosses the membrane as a helical span at residues 289-309 (PSFLLFQLGAVISIVVYSQLT). Topologically, residues 310–312 (DPD) are periplasmic. Residues 313–333 (IMLLAGAFLGMFVNGMLGGYG) traverse the membrane as a helical segment. Topologically, residues 334–357 (ALMAEAYPTEARATAQNVLFNIGR) are cytoplasmic. A run of 2 helical transmembrane segments spans residues 358-378 (AVGG…SFQT) and 379-399 (AIAL…FLIP). Topologically, residues 400-407 (ELKGKALD) are cytoplasmic.

This sequence belongs to the major facilitator superfamily. Aromatic acid:H(+) symporter (AAHS) (TC 2.A.1.15) family.

It localises to the cell inner membrane. In Haemophilus influenzae (strain ATCC 51907 / DSM 11121 / KW20 / Rd), this protein is Putative metabolite transport protein HI_1104.